The following is a 339-amino-acid chain: Phenylalanine--tRNA ligase alpha subunit (339 aa).

E254 contributes to the Mg(2+) binding site.

The protein belongs to the class-II aminoacyl-tRNA synthetase family. Phe-tRNA synthetase alpha subunit type 1 subfamily. In terms of assembly, tetramer of two alpha and two beta subunits. The cofactor is Mg(2+).

It is found in the cytoplasm. It catalyses the reaction tRNA(Phe) + L-phenylalanine + ATP = L-phenylalanyl-tRNA(Phe) + AMP + diphosphate + H(+). The protein is Phenylalanine--tRNA ligase alpha subunit of Clostridium kluyveri (strain ATCC 8527 / DSM 555 / NBRC 12016 / NCIMB 10680 / K1).